A 624-amino-acid chain; its full sequence is Cell pattern formation-associated protein ust1 (624 aa).

Disordered stretches follow at residues 1–24 and 43–99; these read MSTA…APTG and RSGS…GHSS. A compositionally biased stretch (low complexity) spans 43–62; it reads RSGSVPASASGSAPGSASGS. A compositionally biased stretch (basic residues) spans 70–85; the sequence is QHHTGHHHYSAHHTHS. The 107-residue stretch at 233–339 folds into the HTH APSES-type domain; the sequence is RVTTTLWEDE…PNIQSFLYHP (107 aa). The segment at residues 267-288 is a DNA-binding region (H-T-H motif); that stretch reads GTKLLNVCGMSRGKRDGILKNE. Positions 352–362 are enriched in low complexity; that stretch reads AQERQAQRQRA. Disordered regions lie at residues 352–456, 474–504, and 538–624; these read AQER…QQQQ, QQAY…LNNS, and SWND…IHHE. Residues 369–391 are compositionally biased toward polar residues; sequence PGANGTSQAPPLMRANTTPSNGD. A compositionally biased stretch (low complexity) spans 392–426; that stretch reads TSTFSSGLSSLGSWTGSHDQGHASAPTTAQPSPSS. Over residues 427–451 the composition is skewed to polar residues; sequence MHNGATQMHMSLSNHGTASPTYAQS. Residues 571-587 are compositionally biased toward basic and acidic residues; sequence LDGDDLHSPDSSDDRLA. Residues 615 to 624 are compositionally biased toward gly residues; that stretch reads VGNGSGIHHE.

It belongs to the EFG1/PHD1/stuA family. In terms of processing, phosphorylated but is not a target of cAMP signaling.

It localises to the nucleus. Its function is as follows. Transcription factor that regulates asexual reproduction. Binds the StuA-response elements (StRE) with the consensus sequence 5'-(A/T)CGCG(T/A)N(A/C)-3' at the promoters of target genes. Regulates dimorphism, virulence, and the sporulation program. Required for mating, gall induction, and sporogenesis in maize tissue. Regulates expression of the filament-down-regulated gene UM00205 and the teliospore-specific gene ssp1. The chain is Cell pattern formation-associated protein ust1 (ust1) from Mycosarcoma maydis (Corn smut fungus).